The primary structure comprises 623 residues: Chaperone protein HtpG (623 aa).

Residues 1–336 form an a; substrate-binding region; the sequence is MVSKQQTMGF…ASDLPLNISR (336 aa). The interval 337–550 is b; that stretch reads EILQDNKQVE…EQDMGLEMQR (214 aa). A c region spans residues 551 to 623; the sequence is ILQAAGQQIP…NRVNRLLVSS (73 aa).

This sequence belongs to the heat shock protein 90 family. As to quaternary structure, homodimer.

The protein resides in the cytoplasm. Functionally, molecular chaperone. Has ATPase activity. This Legionella pneumophila (strain Lens) protein is Chaperone protein HtpG.